The primary structure comprises 213 residues: MDSSIEQKYKQLLDIVPSVSRETMENLIQFESLILQWNAHINLISAATIPDLWTRHILDSAQIFPLCSHSLQWCDLGSGGGFPAIVIAIFLKEKRSGHINLVESNGKKVAFLRTVIAQLNLPATVYHARIEDIYQKIPISDIITARGLAPLNELLQLIFPLLTEKTIALLQKGRDYATEVKNASANWHFDLLKHTSKIDENSVILEISHIRSY.

S-adenosyl-L-methionine is bound by residues Gly77, Phe82, 130–131 (IE), and Arg146.

Belongs to the methyltransferase superfamily. RNA methyltransferase RsmG family.

Its subcellular location is the cytoplasm. It carries out the reaction guanosine(527) in 16S rRNA + S-adenosyl-L-methionine = N(7)-methylguanosine(527) in 16S rRNA + S-adenosyl-L-homocysteine. Its function is as follows. Specifically methylates the N7 position of guanine in position 527 of 16S rRNA. The chain is Ribosomal RNA small subunit methyltransferase G from Bartonella tribocorum (strain CIP 105476 / IBS 506).